A 146-amino-acid chain; its full sequence is DNA-directed RNA polymerase subunit beta (146 aa).

This sequence belongs to the RNA polymerase beta chain family. The RNAP catalytic core consists of 2 alpha, 1 beta, 1 beta' and 1 omega subunit. When a sigma factor is associated with the core the holoenzyme is formed, which can initiate transcription.

The enzyme catalyses RNA(n) + a ribonucleoside 5'-triphosphate = RNA(n+1) + diphosphate. DNA-dependent RNA polymerase catalyzes the transcription of DNA into RNA using the four ribonucleoside triphosphates as substrates. The protein is DNA-directed RNA polymerase subunit beta (rpoB) of Liberibacter africanus (Citrus greening disease).